A 600-amino-acid polypeptide reads, in one-letter code: MPGDRGALSSPAASSGSPSAAPSGIAACPPPPSPLARASPQASGPRRGASVPQKLAETLSSQYGLNVFVAGLLFLLAWAVHATGVGKSDLLCVLTALMLLQLLWMLWYVGRSYMQRRLIRPKDTHAGARWLRGSITLFAFITIVLGCLKVAYFIGFSECLSATEGVFPVTHAVHTLLQVYFLWGHAKDIIMSFKTLERFGVIHSVFTNLLLWANSVLNESKHQLNEHKERLITLGFGNITIVLDDHTPQCNCTPPALCSALSHGIYYLYPFNIEYQILASTMLYVLWKNIGRRVDSSRHQKMQCRFDGVLVGSVLGLTVLAATIAVVVVYMIHIGRSKSKSESALIMFYLYAITVLLLMGAAGLVGSWIYRVDEKSLDESKNPARKLDADLLVATASGSWLLSWGSILAIACAETRPPYTWYNLPYSVLVIVEKYVQNIFIIESVHLEPEGVPEDVRTLRVVTVCSGEAAALAASSLGSQGTAQDGSPAVNGNLHLQQRCEKEDQEADWEGATGTTRCLDFLQGGMKRRLLRNITAFLFLCNISLWIPPAFGCRPEYDNGLEEIVFGFEPWIIVVNLAMPFSIFYRMHAAAALFEVYCKI.

Positions Met-1 to Ser-50 are disordered. Over Met-1–Ala-56 the chain is Cytoplasmic. Over residues Ala-7–Ala-27 the composition is skewed to low complexity. The chain crosses the membrane as a helical span at residues Glu-57–Trp-78. At Ala-79 to Gly-86 the chain is on the extracellular side. The helical transmembrane segment at Lys-87 to Gly-110 threads the bilayer. Residues Arg-111–Ala-128 are Cytoplasmic-facing. The helical transmembrane segment at Arg-129–Ala-151 threads the bilayer. Topologically, residues Tyr-152–Ser-161 are extracellular. A helical membrane pass occupies residues Ala-162–Ala-186. Topologically, residues Lys-187–Lys-194 are cytoplasmic. Residues Thr-195–Lys-221 traverse the membrane as a helical segment. Residues His-222–Ser-262 are Extracellular-facing. Residues His-263–Lys-288 traverse the membrane as a helical segment. Residues Asn-289–Val-309 are Cytoplasmic-facing. The chain crosses the membrane as a helical span at residues Leu-310–Ile-332. Over His-333–Glu-342 the chain is Extracellular. The helical transmembrane segment at Ser-343 to Trp-368 threads the bilayer. Residues Ile-369–Lys-386 are Cytoplasmic-facing. Residues Leu-387–Ala-411 traverse the membrane as a helical segment. The Extracellular portion of the chain corresponds to Cys-412–Trp-421. The helical transmembrane segment at Tyr-422–Ile-442 threads the bilayer. At Glu-443 to Arg-532 the chain is on the cytoplasmic side. The helical transmembrane segment at Asn-533–Phe-551 threads the bilayer. Over Gly-552 to Glu-569 the chain is Extracellular. Residues Pro-570–Leu-593 traverse the membrane as a helical segment. Residues Phe-594 to Ile-600 lie on the Cytoplasmic side of the membrane.

It belongs to the otopetrin family. Homodimer. Interacts with STAT1, independently of STAT1 phosphorylation status.

Its subcellular location is the cell membrane. It localises to the cell projection. The protein localises to the microvillus. The enzyme catalyses H(+)(in) = H(+)(out). Activated by both acid and alkali, with proton influx in response to extracellular acid and proton efflux during alkali stimulation. Inhibited by Zn(2+); this inhibition is thought to be pH-sensitive. Currents evoked in response to mild acid (pH 6.0) stimulus may also be mildly potentiated by exposure to Zn(2+). Activated by NH(4)Cl. Its function is as follows. Proton-selective ion channel. Biphasically modulated by acid and alkali, mediating proton influx and efflux in response to extracellular acid and base stimulation, respectively. Sour taste receptor, which carries inward currents in response to extracellular acidification. Sensor for ammonium chloride (NH(4)Cl) in taste receptor cells. NH(4)Cl acts by increasing the intracellular pH, thereby generating a driving force for proton entry through OTOP1 channel. Might also participate in alkaline sensation. Plays a role in the regulation of Ca(2+) flux in response to purigenic (ATP, ADP and UDP) stimuli, leading to increase in cytosolic Ca(2+) due to influx of extracellular calcium. May play this role by inhibiting P2Y purinoceptor-mediated Ca(2+) release in a Ca(2+)-dependent manner and promote an influx of Ca(2+) in response to ATP. Through this mechanism and possibly others, plays a role in the formation and function of calcium carbonate-based structures in the vestibular system of the inner ear, called otoconia, that sense gravity and linear acceleration. In obesity, may attenuate adipose tissue inflammation, through the negative regulation of IFNG signaling, hence may play an adaptive role in the maintainance of metabolic homeostasis. Following alkali activation, may also be permeable Na(+), K(+), Cs(+) and Li(+). This is Proton channel OTOP1 from Rattus norvegicus (Rat).